Here is a 497-residue protein sequence, read N- to C-terminus: Glycerol kinase (497 aa).

An ADP-binding site is contributed by threonine 12. ATP contacts are provided by threonine 12, threonine 13, and serine 14. Threonine 12 contributes to the sn-glycerol 3-phosphate binding site. Position 16 (arginine 16) interacts with ADP. 4 residues coordinate sn-glycerol 3-phosphate: arginine 82, glutamate 83, tyrosine 134, and aspartate 243. The glycerol site is built by arginine 82, glutamate 83, tyrosine 134, aspartate 243, and glutamine 244. Positions 265 and 308 each coordinate ADP. Threonine 265, glycine 308, glutamine 312, and glycine 409 together coordinate ATP. Positions 409 and 413 each coordinate ADP.

Belongs to the FGGY kinase family.

The catalysed reaction is glycerol + ATP = sn-glycerol 3-phosphate + ADP + H(+). It functions in the pathway polyol metabolism; glycerol degradation via glycerol kinase pathway; sn-glycerol 3-phosphate from glycerol: step 1/1. Inhibited by fructose 1,6-bisphosphate (FBP). Key enzyme in the regulation of glycerol uptake and metabolism. Catalyzes the phosphorylation of glycerol to yield sn-glycerol 3-phosphate. This chain is Glycerol kinase, found in Solidesulfovibrio magneticus (strain ATCC 700980 / DSM 13731 / RS-1) (Desulfovibrio magneticus).